Consider the following 322-residue polypeptide: MFARQPLRFAQPLKQGFRKYSTEAPAKGKSSLAPIYISVGLAGLGVGLYRYSTASAETPVVDRPKVFTGGEQGWVDLKLSEIENLSHNTKRLRFEFADKEAVSGLQVASALLTKFKPAEGKPVIRPYTPVSDEDQPGYLDLVVKVYPNGPMSEHLHSMNVDQRLEFKGPIPKYPWETNKHKHICLIAGGTGITPMYQLARQIFKNPEDQTKVTLVFGNVSEEDILLKKELQELENTHPRRFKAFYVLDNPPKEWTGGKGYVTKELLKTVLPEPKEEDIKIFVCGPPGMYKAISGPKVSPKDQGELTGLLAELGYNKDQVYKF.

A helical membrane pass occupies residues 32 to 48 (LAPIYISVGLAGLGVGL). Residues 72-176 (QGWVDLKLSE…KGPIPKYPWE (105 aa)) form the FAD-binding FR-type domain. 179–214 (KHKHICLIAGGTGITPMYQLARQIFKNPEDQTKVTL) provides a ligand contact to FAD.

It belongs to the flavoprotein pyridine nucleotide cytochrome reductase family. The cofactor is FAD.

It localises to the mitochondrion outer membrane. The catalysed reaction is 2 Fe(III)-[cytochrome b5] + NADH = 2 Fe(II)-[cytochrome b5] + NAD(+) + H(+). Functionally, may mediate the reduction of outer membrane cytochrome b5. The sequence is that of NADH-cytochrome b5 reductase 2 (mcr1) from Aspergillus clavatus (strain ATCC 1007 / CBS 513.65 / DSM 816 / NCTC 3887 / NRRL 1 / QM 1276 / 107).